The following is a 264-amino-acid chain: Phosphonoacetaldehyde hydrolase (264 aa).

The Nucleophile role is filled by aspartate 9. The Mg(2+) site is built by aspartate 9 and alanine 11. The active-site Schiff-base intermediate with substrate is lysine 50. Aspartate 183 is a binding site for Mg(2+).

The protein belongs to the HAD-like hydrolase superfamily. PhnX family. Homodimer. Mg(2+) is required as a cofactor.

It carries out the reaction phosphonoacetaldehyde + H2O = acetaldehyde + phosphate + H(+). Involved in phosphonate degradation. The sequence is that of Phosphonoacetaldehyde hydrolase from Bacillus cereus (strain ZK / E33L).